Consider the following 70-residue polypeptide: Small, acid-soluble spore protein 1 (70 aa).

Belongs to the alpha/beta-type SASP family.

SASP are bound to spore DNA. They are double-stranded DNA-binding proteins that cause DNA to change to an a-like conformation. They protect the DNA backbone from chemical and enzymatic cleavage and are thus involved in dormant spore's high resistance to UV light. This Bacillus cereus protein is Small, acid-soluble spore protein 1 (sasP-1).